The sequence spans 172 residues: Putative metal-dependent hydrolase OB0782 (172 aa).

Positions 64, 155, and 159 each coordinate Zn(2+).

The protein belongs to the metal hydrolase YfiT family. In terms of assembly, homodimer. Zn(2+) serves as cofactor.

Its subcellular location is the cytoplasm. Functionally, possible metal-dependent hydrolase. In Oceanobacillus iheyensis (strain DSM 14371 / CIP 107618 / JCM 11309 / KCTC 3954 / HTE831), this protein is Putative metal-dependent hydrolase OB0782.